We begin with the raw amino-acid sequence, 118 residues long: Vesicle-associated membrane protein 1 (118 aa).

Residues 1-15 are compositionally biased toward low complexity; that stretch reads MSAPAQPPTEGAEGA. The interval 1–36 is disordered; it reads MSAPAQPPTEGAEGAAPGGGPPGPPPNMTSNRRLQQ. Residues 1–96 are Cytoplasmic-facing; it reads MSAPAQPPTE…KRKYWWKNCK (96 aa). Residues 33-93 enclose the v-SNARE coiled-coil homology domain; that stretch reads RLQQTQAQVE…AKLKRKYWWK (61 aa). Ser-63 is modified (phosphoserine). A helical; Anchor for type IV membrane protein membrane pass occupies residues 97–116; it reads MMIMLGAICAIIVVVIVIYF. Over 117–118 the chain is Vesicular; the sequence is FA.

The protein belongs to the synaptobrevin family. Interacts with VAPA and VAPB.

It localises to the cytoplasmic vesicle. Its subcellular location is the secretory vesicle. The protein resides in the synaptic vesicle membrane. The protein localises to the synapse. It is found in the synaptosome. It localises to the cytoplasmic vesicle membrane. Involved in the targeting and/or fusion of transport vesicles to their target membrane. The sequence is that of Vesicle-associated membrane protein 1 (VAMP1) from Bos taurus (Bovine).